A 77-amino-acid polypeptide reads, in one-letter code: MEKLTILLLVAALLMSTQGLIQSGGENRPKEKIKFLSKRKTVAESWWEGECLGWSNYCTSHSICCSGECILSYCDIW.

An N-terminal signal peptide occupies residues 1–19 (MEKLTILLLVAALLMSTQG). Residues 20–49 (LIQSGGENRPKEKIKFLSKRKTVAESWWEG) constitute a propeptide that is removed on maturation. Disulfide bonds link Cys51/Cys65, Cys58/Cys69, and Cys64/Cys74.

Belongs to the conotoxin O2 superfamily. In terms of tissue distribution, expressed by the venom duct.

It is found in the secreted. The polypeptide is Conotoxin Lt7.1 (Conus litteratus (Lettered cone)).